The following is a 362-amino-acid chain: 3-dehydroquinate synthase (362 aa).

Residues 71-76 (DGEQYK), 105-109 (GVVGD), 129-130 (TT), K142, K151, and 169-172 (CLKT) contribute to the NAD(+) site. Residues E184, H247, and H264 each coordinate Zn(2+).

This sequence belongs to the sugar phosphate cyclases superfamily. Dehydroquinate synthase family. The cofactor is NAD(+). Requires Co(2+) as cofactor. Zn(2+) is required as a cofactor.

The protein localises to the cytoplasm. It carries out the reaction 7-phospho-2-dehydro-3-deoxy-D-arabino-heptonate = 3-dehydroquinate + phosphate. It participates in metabolic intermediate biosynthesis; chorismate biosynthesis; chorismate from D-erythrose 4-phosphate and phosphoenolpyruvate: step 2/7. In terms of biological role, catalyzes the conversion of 3-deoxy-D-arabino-heptulosonate 7-phosphate (DAHP) to dehydroquinate (DHQ). In Shigella flexneri, this protein is 3-dehydroquinate synthase.